Here is a 71-residue protein sequence, read N- to C-terminus: UPF0435 protein BLi00816/BL03111 (71 aa).

Belongs to the UPF0435 family.

The chain is UPF0435 protein BLi00816/BL03111 from Bacillus licheniformis (strain ATCC 14580 / DSM 13 / JCM 2505 / CCUG 7422 / NBRC 12200 / NCIMB 9375 / NCTC 10341 / NRRL NRS-1264 / Gibson 46).